Reading from the N-terminus, the 30-residue chain is Ribonuclease pancreatic (30 aa).

Over residues 1–13 (KETAAAKFERQHM) the composition is skewed to basic and acidic residues. Residues 1–21 (KETAAAKFERQHMDPAPAAAX) form a disordered region. Substrate contacts are provided by Lys7 and Arg10. His12 functions as the Proton acceptor in the catalytic mechanism.

The protein belongs to the pancreatic ribonuclease family. In terms of assembly, monomer. Interacts with and forms tight 1:1 complexes with RNH1. Dimerization of two such complexes may occur. Interaction with RNH1 inhibits this protein. Pancreas.

Its subcellular location is the secreted. It carries out the reaction an [RNA] containing cytidine + H2O = an [RNA]-3'-cytidine-3'-phosphate + a 5'-hydroxy-ribonucleotide-3'-[RNA].. The catalysed reaction is an [RNA] containing uridine + H2O = an [RNA]-3'-uridine-3'-phosphate + a 5'-hydroxy-ribonucleotide-3'-[RNA].. Its function is as follows. Endonuclease that catalyzes the cleavage of RNA on the 3' side of pyrimidine nucleotides. Acts on single-stranded and double-stranded RNA. This is Ribonuclease pancreatic (RNASE1) from Odocoileus virginianus virginianus (Virginia white-tailed deer).